The primary structure comprises 168 residues: Small ribosomal subunit protein uS5 (168 aa).

Residues 13 to 76 (LKEQVVDIKR…EDAKKNLIHV (64 aa)) form the S5 DRBM domain.

It belongs to the universal ribosomal protein uS5 family. In terms of assembly, part of the 30S ribosomal subunit. Contacts proteins S4 and S8.

Its function is as follows. With S4 and S12 plays an important role in translational accuracy. Functionally, located at the back of the 30S subunit body where it stabilizes the conformation of the head with respect to the body. This Alkaliphilus oremlandii (strain OhILAs) (Clostridium oremlandii (strain OhILAs)) protein is Small ribosomal subunit protein uS5.